A 557-amino-acid chain; its full sequence is Tripeptidyl-peptidase 1 (557 aa).

The N-terminal stretch at 1 to 16 (MRVAVFVLSFIWLVNG) is a signal peptide. Residues 17–190 (ELLEADQDAV…WEGARQAILG (174 aa)) constitute a propeptide, removed in mature form. The N-linked (GlcNAc...) asparagine glycan is linked to Asn-53. A disulfide bridge connects residues Cys-107 and Cys-118. The 364-residue stretch at 194–557 (GVTPAVIRNR…YPVFLASLMD (364 aa)) folds into the Peptidase S53 domain. Asn-205 and Asn-216 each carry an N-linked (GlcNAc...) asparagine glycan. Active-site charge relay system residues include Glu-266 and Asp-270. 3 N-linked (GlcNAc...) asparagine glycosylation sites follow: Asn-280, Asn-307, and Asn-438. 2 cysteine pairs are disulfide-bonded: Cys-359/Cys-521 and Cys-517/Cys-532. The active-site Charge relay system is Ser-470. Ca(2+) contacts are provided by Asp-512 and Val-513. Asp-538 provides a ligand contact to Ca(2+).

The cofactor is Ca(2+). Post-translationally, activated by autocatalytic proteolytical processing.

It is found in the lysosome. The catalysed reaction is Release of an N-terminal tripeptide from a polypeptide, but also has endopeptidase activity.. In terms of biological role, lysosomal serine protease with tripeptidyl-peptidase I activity. May act as a non-specific lysosomal peptidase which generates tripeptides from the breakdown products produced by lysosomal proteinases. Requires substrates with an unsubstituted N-terminus. The sequence is that of Tripeptidyl-peptidase 1 from Danio rerio (Zebrafish).